Consider the following 276-residue polypeptide: Dermonecrotic toxin Ls4SicTox-alphaIII1i (276 aa).

His-3 is a catalytic residue. 2 residues coordinate Mg(2+): Glu-23 and Asp-25. His-38 (nucleophile) is an active-site residue. A disulfide bridge links Cys-42 with Cys-48. Residue Asp-82 coordinates Mg(2+).

It belongs to the arthropod phospholipase D family. Class I subfamily. It depends on Mg(2+) as a cofactor. As to expression, expressed by the venom gland.

It localises to the secreted. It catalyses the reaction an N-(acyl)-sphingosylphosphocholine = an N-(acyl)-sphingosyl-1,3-cyclic phosphate + choline. It carries out the reaction an N-(acyl)-sphingosylphosphoethanolamine = an N-(acyl)-sphingosyl-1,3-cyclic phosphate + ethanolamine. The enzyme catalyses a 1-acyl-sn-glycero-3-phosphocholine = a 1-acyl-sn-glycero-2,3-cyclic phosphate + choline. The catalysed reaction is a 1-acyl-sn-glycero-3-phosphoethanolamine = a 1-acyl-sn-glycero-2,3-cyclic phosphate + ethanolamine. Functionally, dermonecrotic toxins cleave the phosphodiester linkage between the phosphate and headgroup of certain phospholipids (sphingolipid and lysolipid substrates), forming an alcohol (often choline) and a cyclic phosphate. This toxin acts on sphingomyelin (SM). It may also act on ceramide phosphoethanolamine (CPE), lysophosphatidylcholine (LPC) and lysophosphatidylethanolamine (LPE), but not on lysophosphatidylserine (LPS), and lysophosphatidylglycerol (LPG). It acts by transphosphatidylation, releasing exclusively cyclic phosphate products as second products. Induces dermonecrosis, hemolysis, increased vascular permeability, edema, inflammatory response, and platelet aggregation. This Loxosceles sp. (strain 4 GJB-2008) (Recluse spider) protein is Dermonecrotic toxin Ls4SicTox-alphaIII1i.